We begin with the raw amino-acid sequence, 671 residues long: Probable serine/threonine-protein kinase DDB_G0286627 (671 aa).

Residues 31–283 form the Protein kinase domain; the sequence is WVIERQLSKG…SHQLIKHPFF (253 aa). ATP contacts are provided by residues 37-45 and Lys61; that span reads LSKGSFGQV. The Proton acceptor role is filled by Asp148. A helical transmembrane segment spans residues 369-389; the sequence is FKIIYLFLILLFLMTILVNLN. The segment at 410–523 is disordered; that stretch reads PESNPIKKPS…PPVTETPKPT (114 aa). The segment covering 427–490 has biased composition (low complexity); the sequence is NQYSEGSQSS…PTDSSTTDPP (64 aa). The span at 491-513 shows a compositional bias: pro residues; sequence VTDPPITDPPITDPPVTDPPITE.

It belongs to the protein kinase superfamily. STE Ser/Thr protein kinase family. It depends on Mg(2+) as a cofactor.

It is found in the membrane. It catalyses the reaction L-seryl-[protein] + ATP = O-phospho-L-seryl-[protein] + ADP + H(+). The catalysed reaction is L-threonyl-[protein] + ATP = O-phospho-L-threonyl-[protein] + ADP + H(+). The chain is Probable serine/threonine-protein kinase DDB_G0286627 from Dictyostelium discoideum (Social amoeba).